Reading from the N-terminus, the 428-residue chain is Trigger factor (428 aa).

Residues 166 to 250 (GDIVTFDFKG…IKNIKEKILP (85 aa)) enclose the PPIase FKBP-type domain.

It belongs to the FKBP-type PPIase family. Tig subfamily.

It is found in the cytoplasm. The enzyme catalyses [protein]-peptidylproline (omega=180) = [protein]-peptidylproline (omega=0). Functionally, involved in protein export. Acts as a chaperone by maintaining the newly synthesized protein in an open conformation. Functions as a peptidyl-prolyl cis-trans isomerase. The polypeptide is Trigger factor (Mycoplasma mycoides subsp. mycoides SC (strain CCUG 32753 / NCTC 10114 / PG1)).